Here is an 85-residue protein sequence, read N- to C-terminus: Large ribosomal subunit protein bL27 (85 aa).

The disordered stretch occupies residues 1-20 (MAHKKAGGSTRNGRDSEAKR).

It belongs to the bacterial ribosomal protein bL27 family.

This Enterobacter sp. (strain 638) protein is Large ribosomal subunit protein bL27.